Reading from the N-terminus, the 96-residue chain is UPF0235 protein VC0395_A0010/VC395_0502 (96 aa).

The protein belongs to the UPF0235 family.

The sequence is that of UPF0235 protein VC0395_A0010/VC395_0502 from Vibrio cholerae serotype O1 (strain ATCC 39541 / Classical Ogawa 395 / O395).